Consider the following 435-residue polypeptide: Actin-like protein 7A (435 aa).

Disordered stretches follow at residues Met-1–Gln-20 and Gln-29–Lys-65. Positions Ala-31–Pro-51 are required for interaction with TES. A compositionally biased stretch (basic and acidic residues) spans Arg-47 to Lys-65.

It belongs to the actin family. As to quaternary structure, interacts (via N-terminus) with TES (via LIM domain 2). Heterodimer with TES; the heterodimer interacts with ENAH to form a heterotrimer. Interacts with ACTL9. Interacts with CYLC1; the interaction may be relevant for proper acrosome attachment to the nuclear envelope.

It localises to the cytoplasm. The protein localises to the cytoskeleton. Its subcellular location is the golgi apparatus. It is found in the nucleus. Essential for normal spermatogenesis and male fertility. Required for normal sperm head morphology, acroplaxome formation, acrosome attachment, and acrosome granule stability. May anchor and stabilize acrosomal adherence to the acroplaxome at least in part by facilitating the presence of F-actin in the subacrosomal space. May play an important role in formation and fusion of Golgi-derived vesicles during acrosome biogenesis. In Macaca fascicularis (Crab-eating macaque), this protein is Actin-like protein 7A (ACTL7A).